The chain runs to 78 residues: Large ribosomal subunit protein bL28 (78 aa).

This sequence belongs to the bacterial ribosomal protein bL28 family.

The polypeptide is Large ribosomal subunit protein bL28 (Thiobacillus denitrificans (strain ATCC 25259 / T1)).